Consider the following 1100-residue polypeptide: Lysylphosphatidylglycerol biosynthesis bifunctional protein LysX (1100 aa).

The segment at Met-1–Asp-601 is phosphatidylglycerol lysyltransferase. Transmembrane regions (helical) follow at residues Val-18–Val-38, Phe-60–Ala-80, Ile-84–Leu-104, Phe-112–Leu-132, Leu-154–Gly-174, Val-206–Val-226, and Ala-314–Phe-332. The segment at Gly-602–Arg-1100 is lysine--tRNA ligase. The OB DNA-binding region spans Val-661–Ile-739. Mg(2+) is bound by residues Asp-1012 and Glu-1019.

It in the N-terminal section; belongs to the LPG synthetase family. This sequence in the C-terminal section; belongs to the class-II aminoacyl-tRNA synthetase family. Requires Mg(2+) as cofactor.

The protein localises to the cell membrane. It catalyses the reaction tRNA(Lys) + L-lysine + ATP = L-lysyl-tRNA(Lys) + AMP + diphosphate. The catalysed reaction is L-lysyl-tRNA(Lys) + a 1,2-diacyl-sn-glycero-3-phospho-(1'-sn-glycerol) = a 1,2-diacyl-sn-glycero-3-phospho-1'-(3'-O-L-lysyl)-sn-glycerol + tRNA(Lys). Its function is as follows. Catalyzes the production of L-lysyl-tRNA(Lys)transfer and the transfer of a lysyl group from L-lysyl-tRNA(Lys) to membrane-bound phosphatidylglycerol (PG), which produces lysylphosphatidylglycerol (LPG), one of the components of the bacterial membrane with a positive net charge. LPG synthesis contributes to the resistance to cationic antimicrobial peptides (CAMPs) and likely protects M.tuberculosis against the CAMPs produced by competiting microorganisms (bacteriocins). In fact, the modification of anionic phosphatidylglycerol with positively charged L-lysine results in repulsion of the peptides. The polypeptide is Lysylphosphatidylglycerol biosynthesis bifunctional protein LysX (lysX) (Mycolicibacterium vanbaalenii (strain DSM 7251 / JCM 13017 / BCRC 16820 / KCTC 9966 / NRRL B-24157 / PYR-1) (Mycobacterium vanbaalenii)).